The primary structure comprises 471 residues: Extracellular endo-alpha-(1-&gt;5)-L-arabinanase (471 aa).

The N-terminal stretch at 1–19 (MRFLFLMITLTALTGYILA) is a signal peptide. D32 serves as the catalytic Proton acceptor. Residues D32, G117, 167–170 (NALD), 187–189 (SWF), and 219–223 (HSSME) each bind substrate. E223 functions as the Proton donor in the catalytic mechanism. H314 is a Ca(2+) binding site.

It belongs to the glycosyl hydrolase 43 family. As to quaternary structure, monomer. Requires Ca(2+) as cofactor.

It is found in the secreted. It catalyses the reaction Endohydrolysis of (1-&gt;5)-alpha-arabinofuranosidic linkages in (1-&gt;5)-arabinans.. The protein operates within glycan metabolism; L-arabinan degradation. Involved in the degradation of arabinan and is a key enzyme in the complete degradation of the plant cell wall. Catalyzes the internal cleavage of alpha-(1-&gt;5)-L-arabinofuranosyl residues in different arabinan-containing polysaccharides, and releases arabinotriose and arabinobiose as end products. It acts on branched arabinan (from sugar beet), but more slowly when compared to linear or debranched arabinan. In Thermotoga petrophila (strain ATCC BAA-488 / DSM 13995 / JCM 10881 / RKU-1), this protein is Extracellular endo-alpha-(1-&gt;5)-L-arabinanase.